The primary structure comprises 359 residues: Putative plant UBX domain-containing protein 15 (359 aa).

One can recognise a UBX domain in the interval 277–357 (DRSVVCSISV…GIANSIISVT (81 aa)).

The polypeptide is Putative plant UBX domain-containing protein 15 (Arabidopsis thaliana (Mouse-ear cress)).